A 248-amino-acid chain; its full sequence is 3-deoxy-manno-octulosonate cytidylyltransferase (248 aa).

This sequence belongs to the KdsB family.

The protein localises to the cytoplasm. The catalysed reaction is 3-deoxy-alpha-D-manno-oct-2-ulosonate + CTP = CMP-3-deoxy-beta-D-manno-octulosonate + diphosphate. The protein operates within nucleotide-sugar biosynthesis; CMP-3-deoxy-D-manno-octulosonate biosynthesis; CMP-3-deoxy-D-manno-octulosonate from 3-deoxy-D-manno-octulosonate and CTP: step 1/1. Its pathway is bacterial outer membrane biogenesis; lipopolysaccharide biosynthesis. Its function is as follows. Activates KDO (a required 8-carbon sugar) for incorporation into bacterial lipopolysaccharide in Gram-negative bacteria. This chain is 3-deoxy-manno-octulosonate cytidylyltransferase, found in Enterobacter sp. (strain 638).